We begin with the raw amino-acid sequence, 305 residues long: tRNA dimethylallyltransferase (305 aa).

8–15 (GPTGTGKS) provides a ligand contact to ATP. Residue 10–15 (TGTGKS) coordinates substrate.

It belongs to the IPP transferase family. Monomer. Mg(2+) is required as a cofactor.

It catalyses the reaction adenosine(37) in tRNA + dimethylallyl diphosphate = N(6)-dimethylallyladenosine(37) in tRNA + diphosphate. Its function is as follows. Catalyzes the transfer of a dimethylallyl group onto the adenine at position 37 in tRNAs that read codons beginning with uridine, leading to the formation of N6-(dimethylallyl)adenosine (i(6)A). This chain is tRNA dimethylallyltransferase, found in Mycobacterium sp. (strain KMS).